The chain runs to 502 residues: MAINAQEISALIKKQIENFQPNFDVTETGIVTYIGDGIARARGLDNAMSGELLEFENGAYGMAQNLESNDVGIIILGDFSAIREGDVVKRTGKIMEVPVGEALIGRVVNPLGQPVDGLGDIETTGFRPVETPAPGVMQRKSVSEPLQTGLKAIDALVPIGRGQRELIIGDRQTGKTSVAIDAILNQKGQDMICIYVAIGQKESTVRTQVETLRRYGALDYTIVVTASASQPSPLLFIAPYAGVAMAEEFMYQGKHVLIVYDDLSKQAVAYRELSLLLRRPPGREAYPGDVFYLHSRLLERSAKVSDDLGGGSITALPFIETQAGDISAYIATNVISITDGQIFLQENLFNSGIRPAIDAGSSVSRVGGSAQIKAMKKVAGTLRLDLASYRELEAFTQFGSDLDAATQAKLNRGRRTVEILKQPLHKPLPVEKQVVILYALTHGFLDDVPVDDILAFEEALYDYFDVHYNDLFETIRTTKDLPEEAALDAAIKAFKEHSNFKS.

ATP is bound at residue 169 to 176 (GDRQTGKT).

The protein belongs to the ATPase alpha/beta chains family. In terms of assembly, F-type ATPases have 2 components, CF(1) - the catalytic core - and CF(0) - the membrane proton channel. CF(1) has five subunits: alpha(3), beta(3), gamma(1), delta(1), epsilon(1). CF(0) has three main subunits: a(1), b(2) and c(9-12). The alpha and beta chains form an alternating ring which encloses part of the gamma chain. CF(1) is attached to CF(0) by a central stalk formed by the gamma and epsilon chains, while a peripheral stalk is formed by the delta and b chains.

The protein localises to the cell membrane. The catalysed reaction is ATP + H2O + 4 H(+)(in) = ADP + phosphate + 5 H(+)(out). Produces ATP from ADP in the presence of a proton gradient across the membrane. The alpha chain is a regulatory subunit. The sequence is that of ATP synthase subunit alpha from Streptococcus pyogenes serotype M12 (strain MGAS9429).